A 346-amino-acid chain; its full sequence is Elongation factor Ts (346 aa).

Residues T80 to V83 are involved in Mg(2+) ion dislocation from EF-Tu.

Belongs to the EF-Ts family.

It is found in the cytoplasm. Functionally, associates with the EF-Tu.GDP complex and induces the exchange of GDP to GTP. It remains bound to the aminoacyl-tRNA.EF-Tu.GTP complex up to the GTP hydrolysis stage on the ribosome. The sequence is that of Elongation factor Ts from Streptococcus agalactiae serotype Ia (strain ATCC 27591 / A909 / CDC SS700).